Reading from the N-terminus, the 343-residue chain is Anthranilate phosphoribosyltransferase (343 aa).

5-phospho-alpha-D-ribose 1-diphosphate contacts are provided by residues G84, 87–88 (GD), T92, 94–97 (NIST), 112–120 (KHGNRSASS), and S124. Position 84 (G84) interacts with anthranilate. Residue S96 participates in Mg(2+) binding. N115 provides a ligand contact to anthranilate. R170 serves as a coordination point for anthranilate. Positions 229 and 230 each coordinate Mg(2+).

This sequence belongs to the anthranilate phosphoribosyltransferase family. As to quaternary structure, homodimer. Mg(2+) is required as a cofactor.

It catalyses the reaction N-(5-phospho-beta-D-ribosyl)anthranilate + diphosphate = 5-phospho-alpha-D-ribose 1-diphosphate + anthranilate. Its pathway is amino-acid biosynthesis; L-tryptophan biosynthesis; L-tryptophan from chorismate: step 2/5. Its function is as follows. Catalyzes the transfer of the phosphoribosyl group of 5-phosphorylribose-1-pyrophosphate (PRPP) to anthranilate to yield N-(5'-phosphoribosyl)-anthranilate (PRA). The sequence is that of Anthranilate phosphoribosyltransferase from Bordetella bronchiseptica (strain ATCC BAA-588 / NCTC 13252 / RB50) (Alcaligenes bronchisepticus).